A 412-amino-acid polypeptide reads, in one-letter code: Class E basic helix-loop-helix protein 40 (412 aa).

The segment at 1 to 139 (MERIPSAQPP…LSGRNVETGQ (139 aa)) is essential for interaction with BMAL1, E-box binding and repressor activity against the CLOCK-BMAL1 heterodimer. Residues 52–107 (TYKLPHRLIEKKRRDRINECIAQLKDLLPEHLKLTTLGHLEKAVVLELTLKHVKAL) form the bHLH domain. Residues 75–79 (LKDLL) form a necessary for interaction with RXRA and repressor activity against RXRA region. The 34-residue stretch at 142–175 (FCSGFQTCAREVLQYLAKHENTRDLKSSQLVTHL) folds into the Orange domain. K159 is covalently cross-linked (Glycyl lysine isopeptide (Lys-Gly) (interchain with G-Cter in SUMO1, SUMO2 and SUMO3)). K167 is covalently cross-linked (Glycyl lysine isopeptide (Lys-Gly) (interchain with G-Cter in SUMO2)). Residues 182–303 (LLQGGTSRKP…LSDDEGHFTS (122 aa)) are disordered. S235 is modified (phosphoserine). Over residues 248–271 (ESEKGDLRSEQPCFKSDHGRRFTM) the composition is skewed to basic and acidic residues. K279 participates in a covalent cross-link: Glycyl lysine isopeptide (Lys-Gly) (interchain with G-Cter in SUMO1); alternate. A Glycyl lysine isopeptide (Lys-Gly) (interchain with G-Cter in SUMO1, SUMO2 and SUMO3); alternate cross-link involves residue K279. A Glycyl lysine isopeptide (Lys-Gly) (interchain with G-Cter in SUMO2); alternate cross-link involves residue K279. A Glycyl lysine isopeptide (Lys-Gly) (interchain with G-Cter in SUMO2) cross-link involves residue K288. Position 383 is a phosphoserine (S383).

In terms of assembly, homodimer. Heterodimer with BHLHE41/DEC2. Interacts with TCF3/E47. Interacts with ubiquitin-conjugating enzyme UBE2I/UBC9. Interacts with HDAC1, SUMO1, RXRA and BMAL1. Ubiquitinated; which may lead to proteasomal degradation. In terms of processing, sumoylation inhibits its ubiquitination and promotes its negative regulation of the CLOCK-BMAL1 heterodimer transcriptional activator activity. In terms of tissue distribution, expressed in cartilage, spleen, intestine, lung, and to a lesser extent in heart, brain, liver, muscle and stomach.

The protein resides in the cytoplasm. It localises to the nucleus. Functionally, transcriptional repressor involved in the regulation of the circadian rhythm by negatively regulating the activity of the clock genes and clock-controlled genes. Acts as the negative limb of a novel autoregulatory feedback loop (DEC loop) which differs from the one formed by the PER and CRY transcriptional repressors (PER/CRY loop). Both these loops are interlocked as it represses the expression of PER1/2 and in turn is repressed by PER1/2 and CRY1/2. Represses the activity of the circadian transcriptional activator: CLOCK-BMAL1|BMAL2 heterodimer by competing for the binding to E-box elements (5'-CACGTG-3') found within the promoters of its target genes. Negatively regulates its own expression and the expression of DBP and BHLHE41/DEC2. Acts as a corepressor of RXR and the RXR-LXR heterodimers and represses the ligand-induced RXRA and NR1H3/LXRA transactivation activity. May be involved in the regulation of chondrocyte differentiation via the cAMP pathway. Represses the transcription of NR0B2 and attentuates the transactivation of NR0B2 by the CLOCK-BMAL1 complex. Drives the circadian rhythm of blood pressure through transcriptional repression of ATP1B1 in the cardiovascular system. The chain is Class E basic helix-loop-helix protein 40 (BHLHE40) from Homo sapiens (Human).